Reading from the N-terminus, the 156-residue chain is Small ribosomal subunit protein uS7 (156 aa).

The protein belongs to the universal ribosomal protein uS7 family. In terms of assembly, part of the 30S ribosomal subunit. Contacts proteins S9 and S11.

In terms of biological role, one of the primary rRNA binding proteins, it binds directly to 16S rRNA where it nucleates assembly of the head domain of the 30S subunit. Is located at the subunit interface close to the decoding center, probably blocks exit of the E-site tRNA. This Psychromonas ingrahamii (strain DSM 17664 / CCUG 51855 / 37) protein is Small ribosomal subunit protein uS7.